The sequence spans 112 residues: uncharacterized protein (112 aa).

This is an uncharacterized protein from Bacillus subtilis (strain 168).